Here is a 36-residue protein sequence, read N- to C-terminus: Pancreatic polypeptide (36 aa).

Tyr36 bears the Tyrosine amide mark.

It belongs to the NPY family.

Its subcellular location is the secreted. Hormone secreted by pancreatic cells that acts as a regulator of pancreatic and gastrointestinal functions probably by signaling through the G protein-coupled receptor NPY4R2. In Chinchilla chinchilla (Short-tailed chinchilla), this protein is Pancreatic polypeptide (PPY).